The chain runs to 508 residues: MARSVLSALSELRETRLEKAQALKELGNGPYALRFESSHSTANLQADHADLAKGEERLLTVSVAGRVMTRRVMGKLAFYTLADETGTIQLYLEKATIDAAASNELASGTFVQLTTLVDAGDWIGVTGVLRRTDRGELSVKVQQWQILSKSLQPLPDKWHGLADVEKRYRQRYLDLIVSPQSRETFRRRALMVSAIRRWLDDRAFLEIETPVLQAEAGGAEARPFITHHNTLDLPLYLRIATELHLKRLVVGGFERVYELGRIFRNEGMSTRHNPEFTSVEVYQAYADYIDMMVLTEQLISSVCTQICGSTRITYQGIEIDLTPPWRRASMHELVQEATGLDFMGFKDLAVAASAMARVGLEVPSKADSVGRLLNEAFEQAVEVSLIQPTFVLDYPIEISPLARQHRSKPGLVERFELFIVGRETANAFSELIDPLDQRQRLEAQQARRQAGDLEAHGVDEDFLQALEVGMPPTGGLGIGIDRLVMLFTDSPSIRDVIAFPLLRPELKT.

Positions 416 and 423 each coordinate Mg(2+).

This sequence belongs to the class-II aminoacyl-tRNA synthetase family. As to quaternary structure, homodimer. Mg(2+) is required as a cofactor.

It is found in the cytoplasm. It carries out the reaction tRNA(Lys) + L-lysine + ATP = L-lysyl-tRNA(Lys) + AMP + diphosphate. The polypeptide is Lysine--tRNA ligase (Prochlorococcus marinus (strain MIT 9313)).